A 155-amino-acid polypeptide reads, in one-letter code: Protein FAM162A (155 aa).

The tract at residues R77–K103 is required for proapoptotic activity. A helical transmembrane segment spans residues V104–I121.

This sequence belongs to the UPF0389 family. Interacts with HSP90AB1; HSP90AB1 is essential for FAM162A mitochondrial localization and pro-apoptotic activity. Interacts with VDAC2; the interaction is probably involved in inducing mitochondrial permeability transition.

The protein localises to the mitochondrion membrane. Its function is as follows. Proposed to be involved in regulation of apoptosis; the exact mechanism may differ between cell types/tissues. May be involved in hypoxia-induced cell death of transformed cells implicating cytochrome C release and caspase activation (such as CASP9) and inducing mitochondrial permeability transition. May be involved in hypoxia-induced cell death of neuronal cells probably by promoting release of AIFM1 from mitochondria to cytoplasm and its translocation to the nucleus; however, the involvement of caspases has been reported conflictingly. This is Protein FAM162A (Fam162a) from Mus musculus (Mouse).